We begin with the raw amino-acid sequence, 197 residues long: Phosphoheptose isomerase (197 aa).

Residues 34-196 (MVHCLLGGNK…DRTLFPQDEQ (163 aa)) form the SIS domain. Position 49-51 (49-51 (NGG)) interacts with substrate. Positions 58 and 62 each coordinate Zn(2+). Substrate contacts are provided by residues Glu-62, 91–92 (ND), 117–119 (STS), Ser-122, and Gln-172. 2 residues coordinate Zn(2+): Gln-172 and His-180.

This sequence belongs to the SIS family. GmhA subfamily. In terms of assembly, homotetramer. The cofactor is Zn(2+).

The protein resides in the cytoplasm. The enzyme catalyses 2 D-sedoheptulose 7-phosphate = D-glycero-alpha-D-manno-heptose 7-phosphate + D-glycero-beta-D-manno-heptose 7-phosphate. It participates in carbohydrate biosynthesis; D-glycero-D-manno-heptose 7-phosphate biosynthesis; D-glycero-alpha-D-manno-heptose 7-phosphate and D-glycero-beta-D-manno-heptose 7-phosphate from sedoheptulose 7-phosphate: step 1/1. Catalyzes the isomerization of sedoheptulose 7-phosphate in D-glycero-D-manno-heptose 7-phosphate. In Shewanella sediminis (strain HAW-EB3), this protein is Phosphoheptose isomerase.